The chain runs to 281 residues: Small ribosomal subunit protein uS2 (281 aa).

Belongs to the universal ribosomal protein uS2 family.

This Chlamydia muridarum (strain MoPn / Nigg) protein is Small ribosomal subunit protein uS2 (rpsB).